The chain runs to 548 residues: Non-structural protein NS1 (548 aa).

It belongs to the orbivirus non-structural protein NS1 family.

The polypeptide is Non-structural protein NS1 (Segment-5) (Camelus dromedarius (Dromedary)).